The following is a 333-amino-acid chain: Ribosomal RNA small subunit methyltransferase H (333 aa).

Residues G34–H36, D59, F86, D112, and Q119 contribute to the S-adenosyl-L-methionine site.

The protein belongs to the methyltransferase superfamily. RsmH family.

It localises to the cytoplasm. It carries out the reaction cytidine(1402) in 16S rRNA + S-adenosyl-L-methionine = N(4)-methylcytidine(1402) in 16S rRNA + S-adenosyl-L-homocysteine + H(+). In terms of biological role, specifically methylates the N4 position of cytidine in position 1402 (C1402) of 16S rRNA. This Prosthecochloris aestuarii (strain DSM 271 / SK 413) protein is Ribosomal RNA small subunit methyltransferase H.